Here is a 197-residue protein sequence, read N- to C-terminus: Histidine biosynthesis bifunctional protein HisIE (197 aa).

Positions 1-108 (MMTLYPVVVQ…RFEETGSPTF (108 aa)) are phosphoribosyl-AMP cyclohydrolase. The segment at 109-197 (WLELYRLVRK…VMRELEKRRK (89 aa)) is phosphoribosyl-ATP pyrophosphohydrolase.

The protein in the N-terminal section; belongs to the PRA-CH family. It in the C-terminal section; belongs to the PRA-PH family.

It is found in the cytoplasm. The enzyme catalyses 1-(5-phospho-beta-D-ribosyl)-ATP + H2O = 1-(5-phospho-beta-D-ribosyl)-5'-AMP + diphosphate + H(+). It catalyses the reaction 1-(5-phospho-beta-D-ribosyl)-5'-AMP + H2O = 1-(5-phospho-beta-D-ribosyl)-5-[(5-phospho-beta-D-ribosylamino)methylideneamino]imidazole-4-carboxamide. It functions in the pathway amino-acid biosynthesis; L-histidine biosynthesis; L-histidine from 5-phospho-alpha-D-ribose 1-diphosphate: step 2/9. Its pathway is amino-acid biosynthesis; L-histidine biosynthesis; L-histidine from 5-phospho-alpha-D-ribose 1-diphosphate: step 3/9. This chain is Histidine biosynthesis bifunctional protein HisIE (hisI), found in Thermotoga maritima (strain ATCC 43589 / DSM 3109 / JCM 10099 / NBRC 100826 / MSB8).